Here is a 265-residue protein sequence, read N- to C-terminus: MSELRFVRMGFGADRVEYQEAWDEQRRVHAARFVDEVPDTVLLLEHPPVYTAGRRTEDSERPLDGTPVIDVDRGGKITWHGPGQLVGYPIQKLPRPVDVVAHVRRLEEALIRTCAEFGLETSRVEGRSGVWVLGDPVEQRPVLGGLSLDFDPRLSDDEFDPRLNGPEYAPSNAGQRREDRKIAAIGIRVAKGVTMHGFALNVNPDNKWFDKIIPCGIRDAGVASLANELGRDVTIEEVLPVAERHLRDVLENAELKPRVIEKTPA.

In terms of domain architecture, BPL/LPL catalytic spans 35-254; that stretch reads DEVPDTVLLL…HLRDVLENAE (220 aa). Substrate is bound by residues 73–80, 184–186, and 197–199; these read RGGKITWH, AIG, and GFA. Residue C215 is the Acyl-thioester intermediate of the active site.

Belongs to the LipB family.

It is found in the cytoplasm. It catalyses the reaction octanoyl-[ACP] + L-lysyl-[protein] = N(6)-octanoyl-L-lysyl-[protein] + holo-[ACP] + H(+). It functions in the pathway protein modification; protein lipoylation via endogenous pathway; protein N(6)-(lipoyl)lysine from octanoyl-[acyl-carrier-protein]: step 1/2. In terms of biological role, catalyzes the transfer of endogenously produced octanoic acid from octanoyl-acyl-carrier-protein onto the lipoyl domains of lipoate-dependent enzymes. Lipoyl-ACP can also act as a substrate although octanoyl-ACP is likely to be the physiological substrate. The protein is Octanoyltransferase of Streptomyces coelicolor (strain ATCC BAA-471 / A3(2) / M145).